Reading from the N-terminus, the 188-residue chain is dCTP deaminase (188 aa).

DCTP contacts are provided by residues 111-116 (KSTYAR), 135-137 (TLE), Gln156, Tyr170, and Gln180. The active-site Proton donor/acceptor is Glu137.

It belongs to the dCTP deaminase family. As to quaternary structure, homotrimer.

It catalyses the reaction dCTP + H2O + H(+) = dUTP + NH4(+). It functions in the pathway pyrimidine metabolism; dUMP biosynthesis; dUMP from dCTP (dUTP route): step 1/2. Functionally, catalyzes the deamination of dCTP to dUTP. This Cupriavidus taiwanensis (strain DSM 17343 / BCRC 17206 / CCUG 44338 / CIP 107171 / LMG 19424 / R1) (Ralstonia taiwanensis (strain LMG 19424)) protein is dCTP deaminase.